A 122-amino-acid polypeptide reads, in one-letter code: Small ribosomal subunit protein uS13 (122 aa).

Residues 99–122 (RGQRTHTNARTRKGPAKAIAGKKK) form a disordered region.

It belongs to the universal ribosomal protein uS13 family. In terms of assembly, part of the 30S ribosomal subunit. Forms a loose heterodimer with protein S19. Forms two bridges to the 50S subunit in the 70S ribosome.

In terms of biological role, located at the top of the head of the 30S subunit, it contacts several helices of the 16S rRNA. In the 70S ribosome it contacts the 23S rRNA (bridge B1a) and protein L5 of the 50S subunit (bridge B1b), connecting the 2 subunits; these bridges are implicated in subunit movement. Contacts the tRNAs in the A and P-sites. The protein is Small ribosomal subunit protein uS13 of Rhodopseudomonas palustris (strain TIE-1).